A 207-amino-acid polypeptide reads, in one-letter code: dTTP/UTP pyrophosphatase (207 aa).

Residue D87 is the Proton acceptor of the active site.

Belongs to the Maf family. YhdE subfamily. A divalent metal cation is required as a cofactor.

Its subcellular location is the cytoplasm. The enzyme catalyses dTTP + H2O = dTMP + diphosphate + H(+). The catalysed reaction is UTP + H2O = UMP + diphosphate + H(+). Its function is as follows. Nucleoside triphosphate pyrophosphatase that hydrolyzes dTTP and UTP. May have a dual role in cell division arrest and in preventing the incorporation of modified nucleotides into cellular nucleic acids. This Nitrosomonas europaea (strain ATCC 19718 / CIP 103999 / KCTC 2705 / NBRC 14298) protein is dTTP/UTP pyrophosphatase.